A 591-amino-acid polypeptide reads, in one-letter code: L-fucose isomerase (591 aa).

Catalysis depends on proton acceptor residues Glu-337 and Asp-361. Mn(2+)-binding residues include Glu-337, Asp-361, and His-528.

It belongs to the L-fucose isomerase family. In terms of assembly, homohexamer. Mn(2+) is required as a cofactor.

The protein localises to the cytoplasm. The catalysed reaction is L-fucose = L-fuculose. It participates in carbohydrate degradation; L-fucose degradation; L-lactaldehyde and glycerone phosphate from L-fucose: step 1/3. In terms of biological role, converts the aldose L-fucose into the corresponding ketose L-fuculose. The chain is L-fucose isomerase from Escherichia coli O17:K52:H18 (strain UMN026 / ExPEC).